We begin with the raw amino-acid sequence, 282 residues long: 4-hydroxybenzoate octaprenyltransferase (282 aa).

The next 9 helical transmembrane spans lie at Ile17–Phe37, Ile40–Ile60, Ala90–Ile110, Phe113–Phe133, Ala135–Ser155, Phe163–Met183, Leu207–Lys227, Cys231–Ile251, and Ala262–Ile282.

This sequence belongs to the UbiA prenyltransferase family. The cofactor is Mg(2+).

Its subcellular location is the cell inner membrane. The catalysed reaction is all-trans-octaprenyl diphosphate + 4-hydroxybenzoate = 4-hydroxy-3-(all-trans-octaprenyl)benzoate + diphosphate. Its pathway is cofactor biosynthesis; ubiquinone biosynthesis. Catalyzes the prenylation of para-hydroxybenzoate (PHB) with an all-trans polyprenyl group. Mediates the second step in the final reaction sequence of ubiquinone-8 (UQ-8) biosynthesis, which is the condensation of the polyisoprenoid side chain with PHB, generating the first membrane-bound Q intermediate 3-octaprenyl-4-hydroxybenzoate. The chain is 4-hydroxybenzoate octaprenyltransferase from Legionella pneumophila (strain Lens).